The primary structure comprises 557 residues: MTDNNKYRDVEIRAPRGNKLTAKSWLTEAPLRMLMNNLDPQVAENPKELVVYGGIGRAARNWECYDKIVETLTRLEDDETLLVQSGKPVGVFKTHSNAPRVLIANSNLVPHWANWEHFNELDAKGLAMYGQMTAGSWIYIGSQGIVQGTYETFVEAGRQHYGGTVKAKWVLTAGLGGMGGAQPLAATLAGACSLNIECQQSRIDFRLETRYVDEQATDLDDALVRIAKYTAEGKAISIALHGNAAEILPELVKRGVRPDMVTDQTSAHDPLNGYLPAGWTWEQYRDRAQTEPAAVVKAAKQSMAVHVQAMLDFQKQGVPTFDYGNNIRQMAKEEGVANAFDFPGFVPAYIRPLFCRGVGPFRWAALSGEAEDIYKTDAKVKELIPDDAHLHRWLDMARERISFQGLPARICWVGLGLRAKLGLAFNEMVRSGELSAPVVIGRDHLDSGSVSSPNRETEAMRDGSDAVSDWPLLNALLNTAGGATWVSLHHGGGVGMGFSQHSGMVIVCDGTDEAAERIARVLTNDPGTGVMRHADAGYDIAIDCAKEQGLDLPMITG.

NAD(+) contacts are provided by residues 53–54 (GG), Gln-131, 177–179 (GMG), 197–202 (ECQQSR), 243–244 (NA), 264–268 (QTSAH), 274–275 (YL), and 323–324 (YG). Residue Cys-411 is part of the active site. NAD(+) is bound by residues 455 to 456 (RE) and Gly-493.

As to quaternary structure, homodimer. NAD(+) is required as a cofactor.

The protein resides in the cytoplasm. The catalysed reaction is 4-imidazolone-5-propanoate = trans-urocanate + H2O. The protein operates within amino-acid degradation; L-histidine degradation into L-glutamate; N-formimidoyl-L-glutamate from L-histidine: step 2/3. Functionally, catalyzes the conversion of urocanate to 4-imidazolone-5-propionate. The polypeptide is Urocanate hydratase (Pseudomonas putida (Arthrobacter siderocapsulatus)).